The primary structure comprises 569 residues: 4-coumarate-CoA ligase 2 (569 aa).

The tract at residues 1–24 is disordered; that stretch reads MITIAESHPQIHHSPPDTTAPSTP. Residues 216–220, His-265, 337–339, 359–360, Thr-364, Asp-448, Arg-463, and Lys-554 contribute to the ATP site; these read SSGTT, AAP, and QG. The SBD1 stretch occupies residues 290-359; that stretch reads EMEGMLETIQ…GRLPQAVLGQ (70 aa). The segment at 360–427 is SBD2; sequence GYGMTEAGPV…VRGPQIMKGY (68 aa).

Belongs to the ATP-dependent AMP-binding enzyme family. In terms of tissue distribution, mostly expressed in stems, and, to a lower extent, in bulbs.

It catalyses the reaction (E)-4-coumarate + ATP + CoA = (E)-4-coumaroyl-CoA + AMP + diphosphate. The protein operates within phytoalexin biosynthesis; 3,4',5-trihydroxystilbene biosynthesis; 3,4',5-trihydroxystilbene from trans-4-coumarate: step 1/2. Its function is as follows. Produces CoA thioesters of a variety of hydroxy- and methoxy-substituted cinnamic acids, which are used to synthesize several phenylpropanoid-derived compounds, including anthocyanins, flavonoids, isoflavonoids, coumarins, lignin, suberin and wall-bound phenolics. This chain is 4-coumarate-CoA ligase 2, found in Narcissus pseudonarcissus (Daffodil).